A 249-amino-acid chain; its full sequence is Putative SAP domain-containing protein 049L (249 aa).

Composition is skewed to basic and acidic residues over residues 1-12, 22-38, and 95-107; these read MAAPKAEGEDKP, PKPETKEVKKPKSKEFC, and KKAESSDDKKLDE. The tract at residues 1 to 110 is disordered; the sequence is MAAPKAEGED…DDKKLDEATG (110 aa). The SAP domain maps to 119–153; it reads LSKLTIQTLKGMCKTRNLKISGNKAALVQRLIEAD.

This is Putative SAP domain-containing protein 049L from Frog virus 3 (isolate Goorha) (FV-3).